The primary structure comprises 316 residues: GMP reductase (316 aa).

The active-site Thioimidate intermediate is cysteine 175. 202 to 225 is an NADP(+) binding site; that stretch reads VIADGGIVEHGDIAKALVCGATMV.

It belongs to the IMPDH/GMPR family. GuaC type 2 subfamily.

It catalyses the reaction IMP + NH4(+) + NADP(+) = GMP + NADPH + 2 H(+). Functionally, catalyzes the irreversible NADPH-dependent deamination of GMP to IMP. It functions in the conversion of nucleobase, nucleoside and nucleotide derivatives of G to A nucleotides, and in maintaining the intracellular balance of A and G nucleotides. This chain is GMP reductase, found in Chromobacterium violaceum (strain ATCC 12472 / DSM 30191 / JCM 1249 / CCUG 213 / NBRC 12614 / NCIMB 9131 / NCTC 9757 / MK).